Consider the following 462-residue polypeptide: Fumarate hydratase class II (462 aa).

Substrate is bound by residues 98–100 (SGT), R126, 129–132 (HPND), 139–141 (SSN), and T187. Residues 120–141 (GTRGKGRKVHPNDHVNKGQSSN) are disordered. H188 serves as the catalytic Proton donor/acceptor. The active site involves S318. Residues S319 and 324–326 (KVN) contribute to the substrate site.

Belongs to the class-II fumarase/aspartase family. Fumarase subfamily. Homotetramer.

It localises to the cytoplasm. It carries out the reaction (S)-malate = fumarate + H2O. It participates in carbohydrate metabolism; tricarboxylic acid cycle; (S)-malate from fumarate: step 1/1. Functionally, involved in the TCA cycle. Catalyzes the stereospecific interconversion of fumarate to L-malate. The protein is Fumarate hydratase class II of Nitrosomonas europaea (strain ATCC 19718 / CIP 103999 / KCTC 2705 / NBRC 14298).